A 34-amino-acid chain; its full sequence is Brevinin-2Ec (34 aa).

Residues Cys28 and Cys34 are joined by a disulfide bond.

Belongs to the frog skin active peptide (FSAP) family. Brevinin subfamily. Expressed by the skin glands.

The protein resides in the secreted. In terms of biological role, shows antibacterial activity against representative Gram-negative and Gram-positive bacterial species, and hemolytic activity. The polypeptide is Brevinin-2Ec (Pelophylax lessonae (Pool frog)).